The sequence spans 1006 residues: Probable protein phosphatase DDB_G0279461 (1006 aa).

Over residues 1-12 the composition is skewed to polar residues; the sequence is MMVPSLSTSISS. Disordered regions lie at residues 1–119, 146–188, 214–269, 312–387, 459–513, 525–563, and 604–642; these read MMVP…NNKE, SHAS…RSNS, SSED…NGIR, DAES…PPNQ, NINN…NNIQ, DYNI…NSKF, and GSIP…TSAS. Residues 59 to 69 are compositionally biased toward acidic residues; it reads NEEEGTADNEL. Residues 65-122 adopt a coiled-coil conformation; sequence ADNELESLMSLVNDNNNNNNNTSGIDDDNNNDIDDNNNNNNNNNNNNNNNNNNKEGLN. Low complexity predominate over residues 77–88; it reads NDNNNNNNNTSG. A compositionally biased stretch (acidic residues) spans 89–99; it reads IDDDNNNDIDD. A compositionally biased stretch (low complexity) spans 100-117; sequence NNNNNNNNNNNNNNNNNN. Positions 146-158 are enriched in polar residues; sequence SHASVSNQSSNGS. Low complexity-rich tracts occupy residues 220 to 234, 244 to 254, and 316 to 387; these read SCHN…NKNN, NINNNNNNNCN, and NYNN…PPNQ. Residues 450–516 are a coiled coil; the sequence is KIDNLNKNIN…NNNNNIQDIQ (67 aa). The segment covering 466 to 481 has biased composition (polar residues); that stretch reads TDSQQPLPSIDVNFSH. Positions 482–511 are enriched in low complexity; sequence NNNNNNNDNDNNNNNNNNNNNNNNNNNNNN. Residues 525-538 show a composition bias toward polar residues; that stretch reads DYNIQEGNDINNDN. 2 stretches are compositionally biased toward low complexity: residues 552–561 and 613–639; these read SSNNNNNNNS and NNNN…TTTT. One can recognise a PPM-type phosphatase domain in the interval 744-1005; sequence DINKRGLKRA…DNISIIVVTL (262 aa). Mn(2+) contacts are provided by Asp784, Gly785, Asp956, and Asp996.

In the C-terminal section; belongs to the PP2C family. It depends on Mg(2+) as a cofactor. Requires Mn(2+) as cofactor.

It catalyses the reaction O-phospho-L-seryl-[protein] + H2O = L-seryl-[protein] + phosphate. The catalysed reaction is O-phospho-L-threonyl-[protein] + H2O = L-threonyl-[protein] + phosphate. This is Probable protein phosphatase DDB_G0279461 from Dictyostelium discoideum (Social amoeba).